We begin with the raw amino-acid sequence, 209 residues long: Orotate phosphoribosyltransferase (209 aa).

Residues Arg-96, Lys-100, His-102, and 122–130 (EDLISTGGS) each bind 5-phospho-alpha-D-ribose 1-diphosphate. Residue Ser-126 participates in orotate binding.

The protein belongs to the purine/pyrimidine phosphoribosyltransferase family. PyrE subfamily. In terms of assembly, homodimer. It depends on Mg(2+) as a cofactor.

It catalyses the reaction orotidine 5'-phosphate + diphosphate = orotate + 5-phospho-alpha-D-ribose 1-diphosphate. It functions in the pathway pyrimidine metabolism; UMP biosynthesis via de novo pathway; UMP from orotate: step 1/2. Functionally, catalyzes the transfer of a ribosyl phosphate group from 5-phosphoribose 1-diphosphate to orotate, leading to the formation of orotidine monophosphate (OMP). The polypeptide is Orotate phosphoribosyltransferase (Lactococcus lactis subsp. cremoris (strain MG1363)).